The following is a 164-amino-acid chain: UPF0478 protein SSP1024 (164 aa).

Residues 7–27 (IAGIIAAVAFLILVIGIVVVL) form a helical membrane-spanning segment. Residues 136-164 (RNRRDSANYKTSSVANETNHSYTTRVDNK) are disordered. Positions 143-164 (NYKTSSVANETNHSYTTRVDNK) are enriched in polar residues.

The protein belongs to the UPF0478 family.

The protein localises to the cell membrane. The protein is UPF0478 protein SSP1024 of Staphylococcus saprophyticus subsp. saprophyticus (strain ATCC 15305 / DSM 20229 / NCIMB 8711 / NCTC 7292 / S-41).